Reading from the N-terminus, the 279-residue chain is Acetylglutamate kinase (279 aa).

Residues 64 to 65, Arg-86, and Asn-177 contribute to the substrate site; that span reads GG.

Belongs to the acetylglutamate kinase family. ArgB subfamily.

The protein resides in the cytoplasm. The enzyme catalyses N-acetyl-L-glutamate + ATP = N-acetyl-L-glutamyl 5-phosphate + ADP. Its pathway is amino-acid biosynthesis; L-arginine biosynthesis; N(2)-acetyl-L-ornithine from L-glutamate: step 2/4. Catalyzes the ATP-dependent phosphorylation of N-acetyl-L-glutamate. This chain is Acetylglutamate kinase, found in Campylobacter jejuni subsp. jejuni serotype O:23/36 (strain 81-176).